The chain runs to 253 residues: Probable transcriptional regulatory protein RAF_ORF0717 (253 aa).

Positions 1-21 are disordered; it reads MAGHSKFKNIQHRKGAQDKKR.

This sequence belongs to the TACO1 family.

Its subcellular location is the cytoplasm. This is Probable transcriptional regulatory protein RAF_ORF0717 from Rickettsia africae (strain ESF-5).